Reading from the N-terminus, the 197-residue chain is MIGRLSGKLIEKLPPQVVVDVNGVGYEVDVPMTTFYQLPALGQPCTLFTHLAVREDAHLLYGFASKEERQTFRQLIKVTGIGAKIALAILSGMTADELAIAVASEDIKRLSAVPGIGKKTAERLVLELRGKLATGGNLTVPGGLPFAATPDEKSDIVNALLALGYNEKEAAAATKSLPADVTVSEGVRLALKSLMKV.

The interval 1–64 is domain I; sequence MIGRLSGKLI…EDAHLLYGFA (64 aa). The domain II stretch occupies residues 65–143; it reads SKEERQTFRQ…TGGNLTVPGG (79 aa). Positions 143-147 are flexible linker; it reads GLPFA. The domain III stretch occupies residues 148–197; it reads ATPDEKSDIVNALLALGYNEKEAAAATKSLPADVTVSEGVRLALKSLMKV.

This sequence belongs to the RuvA family. In terms of assembly, homotetramer. Forms an RuvA(8)-RuvB(12)-Holliday junction (HJ) complex. HJ DNA is sandwiched between 2 RuvA tetramers; dsDNA enters through RuvA and exits via RuvB. An RuvB hexamer assembles on each DNA strand where it exits the tetramer. Each RuvB hexamer is contacted by two RuvA subunits (via domain III) on 2 adjacent RuvB subunits; this complex drives branch migration. In the full resolvosome a probable DNA-RuvA(4)-RuvB(12)-RuvC(2) complex forms which resolves the HJ.

The protein localises to the cytoplasm. In terms of biological role, the RuvA-RuvB-RuvC complex processes Holliday junction (HJ) DNA during genetic recombination and DNA repair, while the RuvA-RuvB complex plays an important role in the rescue of blocked DNA replication forks via replication fork reversal (RFR). RuvA specifically binds to HJ cruciform DNA, conferring on it an open structure. The RuvB hexamer acts as an ATP-dependent pump, pulling dsDNA into and through the RuvAB complex. HJ branch migration allows RuvC to scan DNA until it finds its consensus sequence, where it cleaves and resolves the cruciform DNA. The protein is Holliday junction branch migration complex subunit RuvA of Chromobacterium violaceum (strain ATCC 12472 / DSM 30191 / JCM 1249 / CCUG 213 / NBRC 12614 / NCIMB 9131 / NCTC 9757 / MK).